Here is a 463-residue protein sequence, read N- to C-terminus: Phosphomethylpyrimidine synthase (463 aa).

Substrate contacts are provided by residues N80, M109, Y138, H173, 193 to 195, 234 to 237, and E273; these read SRG and DGLR. Residue H277 coordinates Zn(2+). Y300 lines the substrate pocket. H341 lines the Zn(2+) pocket. C421, C424, and C429 together coordinate [4Fe-4S] cluster.

The protein belongs to the ThiC family. In terms of assembly, homodimer. It depends on [4Fe-4S] cluster as a cofactor.

The enzyme catalyses 5-amino-1-(5-phospho-beta-D-ribosyl)imidazole + S-adenosyl-L-methionine = 4-amino-2-methyl-5-(phosphooxymethyl)pyrimidine + CO + 5'-deoxyadenosine + formate + L-methionine + 3 H(+). Its pathway is cofactor biosynthesis; thiamine diphosphate biosynthesis. Its function is as follows. Catalyzes the synthesis of the hydroxymethylpyrimidine phosphate (HMP-P) moiety of thiamine from aminoimidazole ribotide (AIR) in a radical S-adenosyl-L-methionine (SAM)-dependent reaction. The protein is Phosphomethylpyrimidine synthase of Anaeromyxobacter sp. (strain K).